The primary structure comprises 210 residues: Urease accessory protein UreF (210 aa).

It belongs to the UreF family. UreD, UreF and UreG form a complex that acts as a GTP-hydrolysis-dependent molecular chaperone, activating the urease apoprotein by helping to assemble the nickel containing metallocenter of UreC. The UreE protein probably delivers the nickel.

Its subcellular location is the cytoplasm. Its function is as follows. Required for maturation of urease via the functional incorporation of the urease nickel metallocenter. This chain is Urease accessory protein UreF, found in Dinoroseobacter shibae (strain DSM 16493 / NCIMB 14021 / DFL 12).